The sequence spans 80 residues: Exodeoxyribonuclease 7 small subunit (80 aa).

The protein belongs to the XseB family. As to quaternary structure, heterooligomer composed of large and small subunits.

It localises to the cytoplasm. It catalyses the reaction Exonucleolytic cleavage in either 5'- to 3'- or 3'- to 5'-direction to yield nucleoside 5'-phosphates.. Bidirectionally degrades single-stranded DNA into large acid-insoluble oligonucleotides, which are then degraded further into small acid-soluble oligonucleotides. In Shigella sonnei (strain Ss046), this protein is Exodeoxyribonuclease 7 small subunit.